The sequence spans 234 residues: MAKKLSKRREALLKKVDATKEYSVDEAMATLKELKSAKFDETVEVALNLNVDPRHADQMVRGSVVLPHGTGKTVRVAVFAKDAKADEAKAAGADLVGAADLIEDIQAGKIDFDIVISTPDMMGVLGKVARVLGPKGLMPNPKTGTVTMDVAKAVENAKGGQVNFRVDKKGNIHAGIGKISFDADKIKENFVTLLEKINRAKPASAKGRYITNAAVSLTMSPSITLDTSEVMEIK.

Belongs to the universal ribosomal protein uL1 family. As to quaternary structure, part of the 50S ribosomal subunit.

Binds directly to 23S rRNA. The L1 stalk is quite mobile in the ribosome, and is involved in E site tRNA release. Its function is as follows. Protein L1 is also a translational repressor protein, it controls the translation of the L11 operon by binding to its mRNA. This Sulfurovum sp. (strain NBC37-1) protein is Large ribosomal subunit protein uL1.